The chain runs to 209 residues: Urease accessory protein UreG (209 aa).

Residue 18–25 participates in GTP binding; the sequence is GPVGSGKT.

The protein belongs to the SIMIBI class G3E GTPase family. UreG subfamily. As to quaternary structure, homodimer. UreD, UreF and UreG form a complex that acts as a GTP-hydrolysis-dependent molecular chaperone, activating the urease apoprotein by helping to assemble the nickel containing metallocenter of UreC. The UreE protein probably delivers the nickel.

The protein localises to the cytoplasm. Facilitates the functional incorporation of the urease nickel metallocenter. This process requires GTP hydrolysis, probably effectuated by UreG. This is Urease accessory protein UreG from Cupriavidus pinatubonensis (strain JMP 134 / LMG 1197) (Cupriavidus necator (strain JMP 134)).